The sequence spans 654 residues: Bifunctional polymyxin resistance protein ArnA (654 aa).

Residues 1–303 (MKVIVFAYHE…NISRIKGKKL (303 aa)) form a formyltransferase ArnAFT region. His105 serves as the catalytic Proton donor; for formyltransferase activity. 137-141 (TKKID) is a (6R)-10-formyltetrahydrofolate binding site. The dehydrogenase ArnADH stretch occupies residues 313–654 (NLKKILILGV…INFFINNNTS (342 aa)). Residues Asp346 and 367 to 368 (DI) contribute to the NAD(+) site. UDP-alpha-D-glucuronate is bound by residues Ala392, Tyr397, and 431–432 (TS). Glu433 functions as the Proton acceptor; for decarboxylase activity in the catalytic mechanism. Residues Arg459, Asn491, 532-534 (QKR), and Tyr612 contribute to the UDP-alpha-D-glucuronate site. The active-site Proton donor; for decarboxylase activity is Arg618.

This sequence in the N-terminal section; belongs to the Fmt family. UDP-L-Ara4N formyltransferase subfamily. The protein in the C-terminal section; belongs to the NAD(P)-dependent epimerase/dehydratase family. UDP-glucuronic acid decarboxylase subfamily. Homohexamer, formed by a dimer of trimers.

It catalyses the reaction UDP-alpha-D-glucuronate + NAD(+) = UDP-beta-L-threo-pentopyranos-4-ulose + CO2 + NADH. It carries out the reaction UDP-4-amino-4-deoxy-beta-L-arabinose + (6R)-10-formyltetrahydrofolate = UDP-4-deoxy-4-formamido-beta-L-arabinose + (6S)-5,6,7,8-tetrahydrofolate + H(+). It functions in the pathway nucleotide-sugar biosynthesis; UDP-4-deoxy-4-formamido-beta-L-arabinose biosynthesis; UDP-4-deoxy-4-formamido-beta-L-arabinose from UDP-alpha-D-glucuronate: step 1/3. Its pathway is nucleotide-sugar biosynthesis; UDP-4-deoxy-4-formamido-beta-L-arabinose biosynthesis; UDP-4-deoxy-4-formamido-beta-L-arabinose from UDP-alpha-D-glucuronate: step 3/3. It participates in bacterial outer membrane biogenesis; lipopolysaccharide biosynthesis. Functionally, bifunctional enzyme that catalyzes the oxidative decarboxylation of UDP-glucuronic acid (UDP-GlcUA) to UDP-4-keto-arabinose (UDP-Ara4O) and the addition of a formyl group to UDP-4-amino-4-deoxy-L-arabinose (UDP-L-Ara4N) to form UDP-L-4-formamido-arabinose (UDP-L-Ara4FN). The modified arabinose is attached to lipid A and is required for resistance to polymyxin and cationic antimicrobial peptides. This is Bifunctional polymyxin resistance protein ArnA from Wigglesworthia glossinidia brevipalpis.